The following is a 331-amino-acid chain: Probable protein phosphatase 2C 1 (331 aa).

Residues 1–29 (MAASSTATRLSPPRLHAPTTPSPHLPLRR) form a disordered region. The PPM-type phosphatase domain occupies 48–292 (THLIPHPRKA…DDITVIVAQV (245 aa)). Mn(2+) is bound by residues aspartate 79, glycine 80, aspartate 210, and aspartate 283. A disordered region spans residues 300 to 331 (DEGVDEEKGQGDEQGSAVAVASSEQKEDSITT).

This sequence belongs to the PP2C family. Mg(2+) is required as a cofactor. Mn(2+) serves as cofactor.

The catalysed reaction is O-phospho-L-seryl-[protein] + H2O = L-seryl-[protein] + phosphate. The enzyme catalyses O-phospho-L-threonyl-[protein] + H2O = L-threonyl-[protein] + phosphate. The sequence is that of Probable protein phosphatase 2C 1 from Oryza sativa subsp. japonica (Rice).